Reading from the N-terminus, the 229-residue chain is Peptidyl-prolyl cis-trans isomerase FKBP17-1, chloroplastic (229 aa).

A chloroplast-targeting transit peptide spans 1–63; sequence MIRCFAWTPL…SISLSIIAVT (63 aa). A PPIase FKBP-type domain is found at 105 to 225; that stretch reads GDQIEIHYYG…VFDIELVSTR (121 aa).

This sequence belongs to the FKBP-type PPIase family.

Its subcellular location is the plastid. The protein localises to the chloroplast thylakoid lumen. The enzyme catalyses [protein]-peptidylproline (omega=180) = [protein]-peptidylproline (omega=0). In terms of biological role, PPIases accelerate the folding of proteins. It catalyzes the cis-trans isomerization of proline imidic peptide bonds in oligopeptides. In Arabidopsis thaliana (Mouse-ear cress), this protein is Peptidyl-prolyl cis-trans isomerase FKBP17-1, chloroplastic (FKBP17-1).